Reading from the N-terminus, the 356-residue chain is Dihydroorotate dehydrogenase (quinone) (356 aa).

Residues 67–71 (AGFDK) and T91 each bind FMN. K71 is a binding site for substrate. 116-120 (NRMGF) lines the substrate pocket. FMN-binding residues include N153 and N186. A substrate-binding site is contributed by N186. Catalysis depends on S189, which acts as the Nucleophile. N191 is a substrate binding site. FMN is bound by residues K228 and T256. A substrate-binding site is contributed by 257 to 258 (NT). Residues G282, G311, and 332 to 333 (YT) contribute to the FMN site.

The protein belongs to the dihydroorotate dehydrogenase family. Type 2 subfamily. Monomer. The cofactor is FMN.

It is found in the cell membrane. It carries out the reaction (S)-dihydroorotate + a quinone = orotate + a quinol. It functions in the pathway pyrimidine metabolism; UMP biosynthesis via de novo pathway; orotate from (S)-dihydroorotate (quinone route): step 1/1. Catalyzes the conversion of dihydroorotate to orotate with quinone as electron acceptor. This Pseudarthrobacter chlorophenolicus (strain ATCC 700700 / DSM 12829 / CIP 107037 / JCM 12360 / KCTC 9906 / NCIMB 13794 / A6) (Arthrobacter chlorophenolicus) protein is Dihydroorotate dehydrogenase (quinone).